Reading from the N-terminus, the 784-residue chain is Ent-kaurene synthase 1, chloroplastic (784 aa).

The N-terminal 28 residues, 1–28, are a transit peptide targeting the chloroplast; that stretch reads MNLSLCIASPLLTKSSRPTALSAIHTAS. Mg(2+) is bound by residues aspartate 528, aspartate 532, asparagine 672, and glutamate 680. Positions 528–532 match the DDXXD motif motif; it reads DDFFD.

It belongs to the terpene synthase family. Mg(2+) serves as cofactor. In terms of tissue distribution, accumulates in leaves.

It is found in the plastid. The protein resides in the chloroplast. It catalyses the reaction ent-copalyl diphosphate = ent-kaur-16-ene + diphosphate. It functions in the pathway secondary metabolite biosynthesis; terpenoid biosynthesis. The protein operates within plant hormone biosynthesis; gibberellin biosynthesis. In terms of biological role, involved in the biosynthesis of ent-kaurene diterpenoids natural products such as oridonin, miltiradiene, eriocalyxin B and nezukol, known to exhibit antitumor, anti-inflammatory and antibacterial activities, and in the production of gibberellins phytohormones. Catalyzes the conversion of ent-copalyl diphosphate (ent-CPP) to ent-kaurene. The sequence is that of Ent-kaurene synthase 1, chloroplastic from Stevia rebaudiana (Stevia).